The sequence spans 303 residues: Esterase (303 aa).

Residues 79–81 (HGG) carry the Involved in the stabilization of the negatively charged intermediate by the formation of the oxyanion hole motif. Catalysis depends on residues serine 149 and glutamate 244.

Belongs to the 'GDXG' lipolytic enzyme family.

It is found in the secreted. The sequence is that of Esterase (est) from Acinetobacter venetianus (strain ATCC 31012 / DSM 23050 / BCRC 14357 / CCUG 45561 / CIP 110063 / KCTC 2702 / LMG 19082 / RAG-1).